Consider the following 59-residue polypeptide: Large ribosomal subunit protein bL32 (59 aa).

Positions 1–20 (MAVPRNRHSNARKNIRRSHH) are disordered.

It belongs to the bacterial ribosomal protein bL32 family.

This Chlamydia muridarum (strain MoPn / Nigg) protein is Large ribosomal subunit protein bL32 (rpmF).